Here is a 400-residue protein sequence, read N- to C-terminus: Zinc finger CCHC domain-containing protein 3 (400 aa).

The interval 1–157 (MATGGGAEEE…LQDEPPAAGP (157 aa)) is disordered. 2 stretches are compositionally biased toward basic and acidic residues: residues 26–38 (ARVEEPEGVREKM) and 47–63 (LAEKKGDFREPRRRDET). Residues 66–75 (GASGGLGSPG) show a composition bias toward gly residues. The segment covering 91–109 (GDPKGRRRDPTGEASDAYR) has biased composition (basic and acidic residues). Position 198 is a phosphotyrosine (Y198). 2 CCHC-type zinc fingers span residues 349-365 (RCFRCGEEGHLSPYCRK) and 369-384 (CNLCGKRGHAFAQCPK).

As to quaternary structure, interacts with CGAS. Interacts with RIGI. Interacts with IFIH1/MDA5.

The protein resides in the cytoplasm. In terms of biological role, nucleic acid-binding protein involved in innate immune response to DNA and RNA viruses. Binds DNA and RNA in the cytoplasm and acts by promoting recognition of viral nucleic acids by virus sensors, such as RIGI, IFIH1/MDA5 and CGAS. Acts as a co-sensor for recognition of double-stranded DNA (dsDNA) by cGAS in the cytoplasm, thereby playing a role in innate immune response to cytosolic dsDNA and DNA virus. Binds dsDNA and probably acts by promoting sensing of dsDNA by CGAS, leading to enhance CGAS oligomerization and activation. Promotes sensing of viral RNA by RIG-I-like receptors proteins RIGI and IFIH1/MDA5 via two mechanisms: binds double-stranded RNA (dsRNA), enhancing the binding of RIGI and IFIH1/MDA5 to dsRNA and promotes 'Lys-63'-linked ubiquitination and subsequent activation of RIGI and IFIH1/MDA5. This is Zinc finger CCHC domain-containing protein 3 from Mus musculus (Mouse).